Here is a 1404-residue protein sequence, read N- to C-terminus: G8 domain-containing protein DDB_G0286897 (1404 aa).

Residues 1–20 form the signal peptide; the sequence is MNYFKYFIFVVFLFFTIVKC. 2 consecutive transmembrane segments (helical) span residues 97–117 and 128–148; these read LVGFNWISMLIASLLSIGLFA and IIILIIGFICLSLMINGIQSI. 11 N-linked (GlcNAc...) asparagine glycosylation sites follow: asparagine 352, asparagine 365, asparagine 413, asparagine 481, asparagine 639, asparagine 838, asparagine 979, asparagine 1003, asparagine 1017, asparagine 1253, and asparagine 1334. The 127-residue stretch at 553–679 folds into the G8 domain; the sequence is STWASGFVPL…YHNTWTKLST (127 aa).

It belongs to the comF family.

It localises to the membrane. The polypeptide is G8 domain-containing protein DDB_G0286897 (Dictyostelium discoideum (Social amoeba)).